A 147-amino-acid polypeptide reads, in one-letter code: Putative pre-16S rRNA nuclease (147 aa).

It belongs to the YqgF nuclease family.

It localises to the cytoplasm. In terms of biological role, could be a nuclease involved in processing of the 5'-end of pre-16S rRNA. This chain is Putative pre-16S rRNA nuclease, found in Ureaplasma parvum serovar 3 (strain ATCC 27815 / 27 / NCTC 11736).